The following is a 188-amino-acid chain: dCTP deaminase (188 aa).

DCTP is bound by residues K111–R116, T135–E137, Q156, Y170, and Q180. E137 functions as the Proton donor/acceptor in the catalytic mechanism.

It belongs to the dCTP deaminase family. Homotrimer.

The enzyme catalyses dCTP + H2O + H(+) = dUTP + NH4(+). Its pathway is pyrimidine metabolism; dUMP biosynthesis; dUMP from dCTP (dUTP route): step 1/2. In terms of biological role, catalyzes the deamination of dCTP to dUTP. This is dCTP deaminase from Pseudomonas putida (strain W619).